A 315-amino-acid chain; its full sequence is MESSSKGLLTQVTQFWNLLDDLAESNPESYQKFIQQQLKEGKELCAAPEPQLCLQTRILKPKEKLLFINLCQWKRIPAPESATHPVPLSIGRPEDISETSDVYTVIDVAYHPDVLQAAEKDQVKKDQLIRMAMRCIEEQFQFTLSNCYYVTKFRIKGSIQRMKQNLMGIQTNPADLREKMRNELTLEKIRSSTVSNSDQFPQLLLPEDQVSSKTACLIEEISSTEIKVEMKRPAYELKIVADQNEKPLKIELKVELPGVNSVSLCDLSVSEDDILIEVSEKYRLYLNLPESVDTEMTTAKFIKEKATLIVTMPLV.

Belongs to the PIH1 family.

This is PIH1 domain-containing protein 2 (PIH1D2) from Bos taurus (Bovine).